A 433-amino-acid polypeptide reads, in one-letter code: MVHSFKYIIIGGGVSAGYAAREFVKQGVHPGELAIISKEAVAPYERPALSKAYLFPESPARLPGFHTCVGSGGERLLPEWYSEKGIQLYLSTEIVSADLAAKFLKSANGEHFDYQTLVIATGSAVIRLTDFGVIGANAKNIFYLREVDDADKLYEAIKRKKNAKRVVVGGGYIGLELSAVLKLNDLDVTMVYPEPWCMPRLFTSEIAAFYEGYYANKGINIIKGTVAVGFTANSDGEVKEVKLKDGRVLEADIVIVGVGGRPQISLFKGQVEEQHGGIKTDSFFKTSVPDVYAVGDVATFPLKLYNDVRRVEHVDHARKSAEQAAKAIFAADVGKSVEEYDYLPYFYSRSFDLSWQFYGDNVGETVLFGDNDPASSKPKFGTYWIKEGKVVGAFLEGGTPDENKAIAKVARAKPAVEDVNQLAEEGLSFASKI.

FAD contacts are provided by residues 12–15 (GGVS), Glu39, Arg46, Lys51, Ile94, and 145–146 (RE). Residues 170-176 (GGYIGLE), Glu194, Arg200, and Gly259 contribute to the NAD(+) site. NADP(+) is bound at residue 172–176 (YIGLE). The NADP(+) site is built by Arg200 and Gly259. Asp296 lines the FAD pocket. 312 to 313 (EH) contacts NAD(+). 312-313 (EH) contributes to the NADP(+) binding site. Val314 is a binding site for FAD. Arg318 contributes to the L-ascorbate binding site. Tyr347 serves as a coordination point for FAD. Tyr347 is an NAD(+) binding site. Tyr347 provides a ligand contact to NADP(+). Residue Arg349 participates in L-ascorbate binding.

This sequence belongs to the FAD-dependent oxidoreductase family. FAD serves as cofactor. In terms of tissue distribution, expressed at relatively low levels in all tissues examined.

The protein resides in the cytoplasm. The catalysed reaction is 2 monodehydro-L-ascorbate radical + NADH + H(+) = 2 L-ascorbate + NAD(+). Catalyzes the conversion of monodehydroascorbate to ascorbate, oxidizing NADH in the process. This chain is Monodehydroascorbate reductase, found in Pisum sativum (Garden pea).